The primary structure comprises 294 residues: Ethylene-inducing xylanase 3 (294 aa).

The N-terminal stretch at 1–19 is a signal peptide; sequence MVCFSSLFVAASAIAGVFA. The 196-residue stretch at 31–226 folds into the GH11 domain; sequence QSTPSSQGTH…SSGSARINVA (196 aa). Glu122 acts as the Nucleophile in catalysis. Glu213 serves as the catalytic Proton donor. A CBM1 domain is found at 259-294; it reads SCAARWGQCGGSGWNGATCCSAGTCQAQNQWYSQCL.

Belongs to the glycosyl hydrolase 11 (cellulase G) family.

It carries out the reaction Endohydrolysis of (1-&gt;4)-beta-D-xylosidic linkages in xylans.. It functions in the pathway glycan degradation; xylan degradation. Functionally, endo-1,4-beta-xylanase involved in the hydrolysis of xylan, a major structural heterogeneous polysaccharide found in plant biomass representing the second most abundant polysaccharide in the biosphere, after cellulose. Exhibits immunity-inducing activity in Nicotiana benthamiana. Can induce strong oxidative burst, activate the expression of defense-related genes, and increase resistance against oomycete and fungal pathogens in N.benthamiana. The chain is Ethylene-inducing xylanase 3 from Verticillium dahliae (strain VdLs.17 / ATCC MYA-4575 / FGSC 10137) (Verticillium wilt).